The chain runs to 413 residues: uncharacterized protein (413 aa).

Disordered regions lie at residues 108–158 and 232–257; these read ESVP…SKIS and DRLG…RLGA. S115 carries the post-translational modification Phosphoserine. Residues 127–139 show a composition bias toward polar residues; it reads SAASRMIANSLNH. Position 141 is a phosphoserine (S141). K239 is covalently cross-linked (Glycyl lysine isopeptide (Lys-Gly) (interchain with G-Cter in SUMO2)). S269 and S296 each carry phosphoserine. The tract at residues 290–336 is disordered; sequence RGPTKASAQPALTVKAKAASSATSTATTPKLRRLALPSRPGLQKKPD. Residues 302–318 show a composition bias toward low complexity; the sequence is TVKAKAASSATSTATTP. The residue at position 342 (S342) is a Phosphoserine.

This is an uncharacterized protein from Mus musculus (Mouse).